The sequence spans 347 residues: NADH-ubiquinone oxidoreductase chain 2 (347 aa).

10 helical membrane passes run 4 to 21 (LALI…VIVM), 26 to 44 (WLLV…IPVL), 59 to 79 (YFLT…TNLL), 93 to 115 (LAST…HFWV), 149 to 169 (LNLN…GWGG), 178 to 198 (ILAY…TYNP), 200 to 220 (LTLL…MLFM), 241 to 261 (ATSV…SGFL), 274 to 294 (ESIF…YFYM), and 323 to 343 (TPLL…APIL).

Belongs to the complex I subunit 2 family. Core subunit of respiratory chain NADH dehydrogenase (Complex I) which is composed of 45 different subunits. Interacts with TMEM242.

The protein resides in the mitochondrion inner membrane. It catalyses the reaction a ubiquinone + NADH + 5 H(+)(in) = a ubiquinol + NAD(+) + 4 H(+)(out). Core subunit of the mitochondrial membrane respiratory chain NADH dehydrogenase (Complex I) which catalyzes electron transfer from NADH through the respiratory chain, using ubiquinone as an electron acceptor. Essential for the catalytic activity and assembly of complex I. This chain is NADH-ubiquinone oxidoreductase chain 2, found in Cardioderma cor (Heart-nosed bat).